Reading from the N-terminus, the 288-residue chain is MNNLSFSELCCLFCCPPCPGKIASKLAFLPPDPTYTLMCDESGSRWTLHLSERADWQYSSREKDAIECFMTRTSKGNRIACMFVRCSPNAKYTLLFSHGNAVDLGQMSSFYIGLGSRINCNIFSYDYSGYGASSGKPTEKNLYADVEAAWLALRTRYGIRPENVIIYGQSIGTVPSVDLAARYESAAVILHSPLTSGMRVAFPDTKKTYCFDAFPNIDKISKITSPVLIIHGTEDEVIDFSHGLALFERCQRPVEPLWVEGAGHNDVELYGQYLERLKQFVSQELVNL.

Active-site charge relay system residues include S170, D235, and H264. Position 282 is a phosphoserine (S282).

Belongs to the AB hydrolase superfamily. ABHD17 family. Palmitoylated on cysteine residues located in a cysteine cluster at the N-terminus which promotes membrane localization. Palmitoylation is required for post-synaptic localization and for depalmitoylating activity towards DLG4/PSD95. As to expression, expressed in brain.

Its subcellular location is the cell membrane. The protein resides in the recycling endosome membrane. It is found in the cell projection. The protein localises to the dendritic spine. It localises to the postsynaptic density membrane. It carries out the reaction S-hexadecanoyl-L-cysteinyl-[protein] + H2O = L-cysteinyl-[protein] + hexadecanoate + H(+). Functionally, hydrolyzes fatty acids from S-acylated cysteine residues in proteins. Has depalmitoylating activity towards DLG4/PSD95. Has depalmitoylating activity towards GAP43. Has depalmitoylating activity towards MAP6. Has depalmitoylating activity towards NRAS. This is Alpha/beta hydrolase domain-containing protein 17B from Mus musculus (Mouse).